A 434-amino-acid chain; its full sequence is Mitochondrial distribution and morphology protein 12 (434 aa).

Positions 1–434 (MSIDIDWERA…VYPSFWTFLV (434 aa)) constitute an SMP-LTD domain. Acidic residues predominate over residues 70–83 (YEEDDNENFSESSE). Disordered regions lie at residues 70 to 141 (YEED…LRSP) and 181 to 277 (TPLG…LPPR). Positions 86 to 97 (SPTREPVDRYGS) are enriched in basic and acidic residues. The span at 215-237 (SAQSRPSTANTGNTLLSRGSMSS) shows a compositional bias: polar residues.

It belongs to the MDM12 family. In terms of assembly, component of the ER-mitochondria encounter structure (ERMES) or MDM complex, composed of MMM1, MDM10, MDM12 and MDM34. An MMM1 homodimer associates with one molecule of MDM12 on each side in a pairwise head-to-tail manner, and the SMP-LTD domains of MMM1 and MDM12 generate a continuous hydrophobic tunnel for phospholipid trafficking.

The protein resides in the mitochondrion outer membrane. It localises to the endoplasmic reticulum membrane. Its function is as follows. Component of the ERMES/MDM complex, which serves as a molecular tether to connect the endoplasmic reticulum (ER) and mitochondria. Components of this complex are involved in the control of mitochondrial shape and protein biogenesis, and function in nonvesicular lipid trafficking between the ER and mitochondria. MDM12 is required for the interaction of the ER-resident membrane protein MMM1 and the outer mitochondrial membrane-resident beta-barrel protein MDM10. The MDM12-MMM1 subcomplex functions in the major beta-barrel assembly pathway that is responsible for biogenesis of all mitochondrial outer membrane beta-barrel proteins, and acts in a late step after the SAM complex. The MDM10-MDM12-MMM1 subcomplex further acts in the TOM40-specific pathway after the action of the MDM12-MMM1 complex. Essential for establishing and maintaining the structure of mitochondria and maintenance of mtDNA nucleoids. This chain is Mitochondrial distribution and morphology protein 12, found in Ajellomyces dermatitidis (strain ER-3 / ATCC MYA-2586) (Blastomyces dermatitidis).